The following is a 296-amino-acid chain: 4-hydroxy-tetrahydrodipicolinate synthase (296 aa).

Thr-49 contacts pyruvate. The active-site Proton donor/acceptor is the Tyr-137. The active-site Schiff-base intermediate with substrate is the Lys-166. Ile-208 is a pyruvate binding site.

The protein belongs to the DapA family. Homotetramer; dimer of dimers.

The protein localises to the cytoplasm. The enzyme catalyses L-aspartate 4-semialdehyde + pyruvate = (2S,4S)-4-hydroxy-2,3,4,5-tetrahydrodipicolinate + H2O + H(+). Its pathway is amino-acid biosynthesis; L-lysine biosynthesis via DAP pathway; (S)-tetrahydrodipicolinate from L-aspartate: step 3/4. Its function is as follows. Catalyzes the condensation of (S)-aspartate-beta-semialdehyde [(S)-ASA] and pyruvate to 4-hydroxy-tetrahydrodipicolinate (HTPA). The polypeptide is 4-hydroxy-tetrahydrodipicolinate synthase (Chlorobaculum parvum (strain DSM 263 / NCIMB 8327) (Chlorobium vibrioforme subsp. thiosulfatophilum)).